The chain runs to 102 residues: Large ribosomal subunit protein eL21 (102 aa).

The span at 1-21 (MVRRSKGFRSRTRKKLRKKPR) shows a compositional bias: basic residues. A disordered region spans residues 1-33 (MVRRSKGFRSRTRKKLRKKPRERGLSPLGPMTQ).

Belongs to the eukaryotic ribosomal protein eL21 family.

In Methanopyrus kandleri (strain AV19 / DSM 6324 / JCM 9639 / NBRC 100938), this protein is Large ribosomal subunit protein eL21.